Consider the following 150-residue polypeptide: Ribonuclease K6 (150 aa).

The first 23 residues, M1 to A23, serve as a signal peptide directing secretion. Residue H38 is the Proton acceptor of the active site. 4 cysteine pairs are disulfide-bonded: C46/C104, C60/C114, C78/C129, and C85/C92. Residues K61–T65 and K86 each bind substrate. An N-linked (GlcNAc...) asparagine glycan is attached at N100. Position 105 (R105) interacts with substrate. H145 functions as the Proton donor in the catalytic mechanism.

It belongs to the pancreatic ribonuclease family. Interacts (via N-terminus) with bacterial lipopolysaccharide (LPS).

The protein resides in the secreted. The protein localises to the lysosome. It is found in the cytoplasmic granule. Functionally, ribonuclease which shows a preference for the pyrimidines uridine and cytosine. Has potent antibacterial activity against a range of Gram-positive and Gram-negative bacteria, including P.aeruginosa, A.baumanii, M.luteus, S.aureus, E.faecalis, E.faecium, S.saprophyticus and E.coli. Causes loss of bacterial membrane integrity, and also promotes agglutination of Gram-negative bacteria. Probably contributes to urinary tract sterility. Bactericidal activity is independent of RNase activity. The polypeptide is Ribonuclease K6 (RNASE6) (Pan troglodytes (Chimpanzee)).